The following is a 386-amino-acid chain: Heavy metal-associated isoprenylated plant protein 5 (386 aa).

Basic and acidic residues predominate over residues 1 to 16 (MGEVQEGPKVEQEKKP). The tract at residues 1–40 (MGEVQEGPKVEQEKKPAATVVPVETTDGKPKSGGGDSAAA) is disordered. Residues 49–112 (VSAFVYKVDM…KLEEKTKRKV (64 aa)) form the HMA 1 domain. A metal cation-binding residues include Cys60 and Cys63. Positions 129-153 (VGEKKADGGDKEAAPPAPAPAAPKE) are disordered. Residues 130 to 141 (GEKKADGGDKEA) show a composition bias toward basic and acidic residues. Residues 153-220 (ESVVPLKIRL…KLKRTVEPLV (68 aa)) enclose the HMA 2 domain. A metal cation-binding residues include Cys164 and Cys167. 2 stretches are compositionally biased toward basic and acidic residues: residues 223–245 (KKDDGAAENKKTEAAAPDAKKEA) and 252–297 (EAKK…KKDG). Residues 223-301 (KKDDGAAENK…EKKKDGGGVP (79 aa)) form a disordered region. Cys383 carries the cysteine methyl ester modification. The S-farnesyl cysteine moiety is linked to residue Cys383. Residues 384–386 (SVM) constitute a propeptide, removed in mature form.

The protein belongs to the HIPP family. Efficiently farnesylated in vitro.

Functionally, heavy-metal-binding protein. Involved in disease resistance. The chain is Heavy metal-associated isoprenylated plant protein 5 from Arabidopsis thaliana (Mouse-ear cress).